The chain runs to 255 residues: tRNA (adenine(58)-N(1))-methyltransferase TrmI (255 aa).

S-adenosyl-L-methionine is bound by residues Ser104–Leu107, Glu125, His130, Glu155, and Asp170.

Belongs to the class I-like SAM-binding methyltransferase superfamily. TRM61 family. Homotetramer composed of a dimer of dimers.

The enzyme catalyses adenosine(58) in tRNA + S-adenosyl-L-methionine = N(1)-methyladenosine(58) in tRNA + S-adenosyl-L-homocysteine + H(+). Catalyzes the S-adenosyl-L-methionine-dependent formation of N(1)-methyladenine at position 58 (m1A58) in tRNA. Is required for cell growth at extreme temperatures. The protein is tRNA (adenine(58)-N(1))-methyltransferase TrmI (trmI) of Thermus thermophilus (strain ATCC BAA-163 / DSM 7039 / HB27).